A 43-amino-acid polypeptide reads, in one-letter code: Cytochrome b559 subunit beta (43 aa).

The chain crosses the membrane as a helical span at residues 18 to 34 (WLAIHGLAIPTVFFFGA). His-22 is a heme binding site.

It belongs to the PsbE/PsbF family. Heterodimer of an alpha subunit and a beta subunit. PSII is composed of 1 copy each of membrane proteins PsbA, PsbB, PsbC, PsbD, PsbE, PsbF, PsbH, PsbI, PsbJ, PsbK, PsbL, PsbM, PsbT, PsbY, PsbZ, Psb30/Ycf12, at least 3 peripheral proteins of the oxygen-evolving complex and a large number of cofactors. It forms dimeric complexes. Heme b is required as a cofactor.

It localises to the plastid. The protein resides in the chloroplast thylakoid membrane. This b-type cytochrome is tightly associated with the reaction center of photosystem II (PSII). PSII is a light-driven water:plastoquinone oxidoreductase that uses light energy to abstract electrons from H(2)O, generating O(2) and a proton gradient subsequently used for ATP formation. It consists of a core antenna complex that captures photons, and an electron transfer chain that converts photonic excitation into a charge separation. This chain is Cytochrome b559 subunit beta, found in Cyanidium caldarium (Red alga).